The following is a 173-amino-acid chain: Shikimate kinase (173 aa).

ATP is bound at residue glycine 14–threonine 19. Serine 18 contacts Mg(2+). Substrate is bound by residues aspartate 36, arginine 60, and glycine 82. ATP is bound at residue arginine 120. Substrate is bound at residue arginine 140. An ATP-binding site is contributed by glutamine 157.

Belongs to the shikimate kinase family. In terms of assembly, monomer. It depends on Mg(2+) as a cofactor.

The protein localises to the cytoplasm. The catalysed reaction is shikimate + ATP = 3-phosphoshikimate + ADP + H(+). It participates in metabolic intermediate biosynthesis; chorismate biosynthesis; chorismate from D-erythrose 4-phosphate and phosphoenolpyruvate: step 5/7. Catalyzes the specific phosphorylation of the 3-hydroxyl group of shikimic acid using ATP as a cosubstrate. The chain is Shikimate kinase from Buchnera aphidicola subsp. Acyrthosiphon pisum (strain APS) (Acyrthosiphon pisum symbiotic bacterium).